A 324-amino-acid polypeptide reads, in one-letter code: tRNA-modifying protein YgfZ (324 aa).

Residue Trp-186 participates in folate binding.

This sequence belongs to the tRNA-modifying YgfZ family.

It is found in the cytoplasm. Folate-binding protein involved in regulating the level of ATP-DnaA and in the modification of some tRNAs. It is probably a key factor in regulatory networks that act via tRNA modification, such as initiation of chromosomal replication. This is tRNA-modifying protein YgfZ from Colwellia psychrerythraea (strain 34H / ATCC BAA-681) (Vibrio psychroerythus).